The sequence spans 2251 residues: U3 small nucleolar RNA-associated protein 10 (2251 aa).

An HEAT repeat occupies 945 to 983; sequence VVPLLLTALADAEAAIRLAAIACLAHILAICKYAGDLAK. 2 helical membrane-spanning segments follow: residues 962–982 and 1460–1480; these read LAAIACLAHILAICKYAGDLA and LLVDILGADDFAAAVAMLLVD.

The protein belongs to the HEATR1/UTP10 family. In terms of assembly, component of the ribosomal small subunit (SSU) processome.

Its subcellular location is the nucleus. It localises to the nucleolus. The protein resides in the membrane. In terms of biological role, involved in nucleolar processing of pre-18S ribosomal RNA. Involved in ribosome biosynthesis. This Mycosarcoma maydis (Corn smut fungus) protein is U3 small nucleolar RNA-associated protein 10.